The primary structure comprises 357 residues: Hemolysin VllY (357 aa).

2 consecutive VOC domains span residues 12–132 (GFEF…FVDR) and 162–313 (EIDH…IFTQ). His165, His243, and Glu322 together coordinate Fe cation.

Belongs to the 4HPPD family. The cofactor is Fe cation.

This chain is Hemolysin VllY (vllY), found in Vibrio vulnificus (strain CMCP6).